A 464-amino-acid polypeptide reads, in one-letter code: Tyrosine aminotransferase (464 aa).

Position 284 is an N6-(pyridoxal phosphate)lysine (lysine 284).

It belongs to the class-I pyridoxal-phosphate-dependent aminotransferase family. In terms of assembly, homodimer. The cofactor is pyridoxal 5'-phosphate. In terms of tissue distribution, expressed in the muscle. Expressed in the hypodermis and intestine.

The catalysed reaction is L-tyrosine + 2-oxoglutarate = 3-(4-hydroxyphenyl)pyruvate + L-glutamate. It carries out the reaction 3-hydroxy-L-phenylalanine + 2-oxoglutarate = 3-(3-hydroxyphenyl)pyruvate + L-glutamate. It participates in amino-acid degradation; L-phenylalanine degradation; acetoacetate and fumarate from L-phenylalanine: step 2/6. Its function is as follows. Transaminase involved in tyrosine breakdown. Converts tyrosine to p-hydroxyphenylpyruvate. Has no transaminase activity towards phenylalanine. Plays protective role against oxidative stress, metabolizing meta-tyrosine and negatively regulating its accumulation. Plays a role in modulating the daf-2/insulin receptor-like transduction pathway through regulating tyrosine levels. Negatively regulates dauer formation. Plays a role in longevity. This is Tyrosine aminotransferase from Caenorhabditis elegans.